The following is a 61-amino-acid chain: Metallothionein-1 (61 aa).

At M1 the chain carries N-acetylmethionine. The interval 1-29 (MDPNCSCSTGGSCTCTSSCACKNCKCTSC) is beta. A divalent metal cation is bound by residues C5, C7, C13, C15, C19, C21, C24, C26, C29, C33, C34, C36, C37, C41, C44, C48, C50, C57, C59, and C60. The tract at residues 30 to 61 (KKSCCSCCPVGCSKCAQGCVCKGAADKCTCCA) is alpha.

This sequence belongs to the metallothionein superfamily. Type 1 family.

Metallothioneins have a high content of cysteine residues that bind various heavy metals; these proteins are transcriptionally regulated by both heavy metals and glucocorticoids. The sequence is that of Metallothionein-1 (Mt1) from Mus musculus (Mouse).